The following is a 293-amino-acid chain: MLAAAKYRNLDPAFVERLAQEAAERFRDRGQAVKYAKRKLHQAFGAFVAGTPAQAVAACVAKIAAGAEPKEAGREAMRAHASSAERVDWLEPFYERVAQWCGPASSVIDLACGLNPLAVPWMALAPGATYACYDVDRTMAEALRALGTVYPVRVNAAAVDLVAAVPAAGVDVALVLKTLTTVEQQRGGRRVAEYRRELTAVQHHSDGARSLSGRRGYADDPDAIVQRAVHGTGYEVVDEAAFGTEALYHLVPLAGTAGRPAPAEGAAEPGATRPVVDVPATARPDADRVDPTG.

Residues F47, 80-82, R86, A111, D134, 160-161, L176, and Q185 contribute to the S-adenosyl-L-methionine site; these read HAS and DL. Low complexity predominate over residues 258-274; sequence GRPAPAEGAAEPGATRP. Positions 258-293 are disordered; it reads GRPAPAEGAAEPGATRPVVDVPATARPDADRVDPTG. Positions 284–293 are enriched in basic and acidic residues; it reads PDADRVDPTG.

It belongs to the methyltransferase superfamily. Aminoglycoside resistance family.

The enzyme catalyses guanosine(1405) in 16S rRNA + S-adenosyl-L-methionine = N(7)-methylguanosine(1405) in 16S rRNA + S-adenosyl-L-homocysteine. Its function is as follows. Specifically methylates the N(7) position of guanine 1405 in 16S rRNA. Confers resistance to aminoglycosides. The chain is 16S rRNA (guanine(1405)-N(7))-methyltransferase (fmrO) from Micromonospora olivasterospora.